The primary structure comprises 51 residues: uncharacterized protein (51 aa).

Residues Glu-3–Leu-30 are a coiled coil.

This is an uncharacterized protein from Bacillus subtilis (strain 168).